The following is a 738-amino-acid chain: Glucan 1,4-alpha-glucosidase SusB (738 aa).

The N-terminal stretch at 1–21 (MKKRKILSLIAFLCISFIANA) is a signal peptide. Glu-194 contacts Ca(2+). Substrate contacts are provided by residues 215–217 (PNS), 437–439 (HHE), and 507–508 (HE). Glu-508, Glu-526, and Glu-532 together coordinate Ca(2+). Catalysis depends on Glu-532, which acts as the Proton donor/acceptor.

The protein belongs to the glycosyl hydrolase 97 family. As to quaternary structure, monomer. It depends on Ca(2+) as a cofactor.

Its subcellular location is the periplasm. It carries out the reaction Hydrolysis of terminal (1-&gt;4)-linked alpha-D-glucose residues successively from non-reducing ends of the chains with release of beta-D-glucose.. It participates in glycan degradation; starch degradation. Glucoamylase that hydrolyzes alpha-1,4-glucosidic linkages, alpha-1,6-, alpha-1,3- and alpha-1,2-glucosidic linkages during starch degradation. This Bacteroides thetaiotaomicron (strain ATCC 29148 / DSM 2079 / JCM 5827 / CCUG 10774 / NCTC 10582 / VPI-5482 / E50) protein is Glucan 1,4-alpha-glucosidase SusB (susB).